Consider the following 560-residue polypeptide: SWI/SNF complex subunit SWI3A homolog (560 aa).

Residues 1-13 (MSPPVAGAASSGD) show a composition bias toward low complexity. The disordered stretch occupies residues 1–22 (MSPPVAGAASSGDGPPGRPPRE). The region spanning 24-127 (YTIPASSGWF…FSASPSRPEA (104 aa)) is the SWIRM domain. Residues 242-293 (HSSSAWTDAETLLLLEGVLKHGDDWDLIAQHVRTKNKSECIARLIQLPFGEH) form the SANT domain. Polar residues predominate over residues 311–330 (TTDGKVNKSTVKESSSQPTE). 2 disordered regions span residues 311–352 (TTDG…EEHP) and 414–445 (QTRAFSSNHARQSDDVGGGDRDVEMHGHPDKK). A compositionally biased stretch (acidic residues) spans 331–342 (TVDDMQIDGNED). Composition is skewed to basic and acidic residues over residues 343–352 (GADKSVEEHP) and 424–445 (RQSDDVGGGDRDVEMHGHPDKK).

Interacts with LFR.

The protein localises to the nucleus. Its function is as follows. Component of a multiprotein complex equivalent of the SWI/SNF complex, an ATP-dependent chromatin-remodeling complex, which is required for the positive and negative regulation of gene expression of a large number of genes. It changes chromatin structure by altering DNA-histone contacts within a nucleosome, leading eventually to a change in nucleosome position, thus facilitating or repressing binding of gene-specific transcription factors. The chain is SWI/SNF complex subunit SWI3A homolog from Oryza sativa subsp. japonica (Rice).